The primary structure comprises 57 residues: MPFTASDICKILFAIILPPLGVFLERGCGADLLINICLTILGWIPGIIHAFYIIFKY.

The helical transmembrane segment at 34-54 (INICLTILGWIPGIIHAFYII) threads the bilayer.

It belongs to the UPF0057 (PMP3) family.

It localises to the cell membrane. In terms of biological role, plays a role in the regulation of membrane potential. Could mediate a proton leak. The sequence is that of Plasma membrane proteolipid 3 (pmp3) from Aspergillus fumigatus (strain ATCC MYA-4609 / CBS 101355 / FGSC A1100 / Af293) (Neosartorya fumigata).